Consider the following 378-residue polypeptide: Chaperone protein DnaJ (378 aa).

The 65-residue stretch at 5–69 (EYYDRLGVSK…QKRAAYDQYG (65 aa)) folds into the J domain. The segment at 134-216 (GVEKEVSYNR…CHGTGHEKQA (83 aa)) adopts a CR-type zinc-finger fold. 8 residues coordinate Zn(2+): C147, C150, C164, C167, C190, C193, C204, and C207. CXXCXGXG motif repeat units lie at residues 147–154 (CGTCLGSG), 164–171 (CRKCHGSG), 190–197 (CDICHGSG), and 204–211 (CQTCHGTG).

The protein belongs to the DnaJ family. As to quaternary structure, homodimer. The cofactor is Zn(2+).

It localises to the cytoplasm. Participates actively in the response to hyperosmotic and heat shock by preventing the aggregation of stress-denatured proteins and by disaggregating proteins, also in an autonomous, DnaK-independent fashion. Unfolded proteins bind initially to DnaJ; upon interaction with the DnaJ-bound protein, DnaK hydrolyzes its bound ATP, resulting in the formation of a stable complex. GrpE releases ADP from DnaK; ATP binding to DnaK triggers the release of the substrate protein, thus completing the reaction cycle. Several rounds of ATP-dependent interactions between DnaJ, DnaK and GrpE are required for fully efficient folding. Also involved, together with DnaK and GrpE, in the DNA replication of plasmids through activation of initiation proteins. This chain is Chaperone protein DnaJ, found in Streptococcus pyogenes serotype M1.